The primary structure comprises 143 residues: Sperm mitochondrial-associated cysteine-rich protein (143 aa).

Phosphoserine occurs at positions 37, 44, and 110. Residues 101 to 143 (CCSSENKTESDSDTSGQTLEKGSQSPQSPPGAQGNWNQKKSNK) form a disordered region. The span at 113–126 (DTSGQTLEKGSQSP) shows a compositional bias: polar residues. The residue at position 128 (Ser128) is a Phosphoserine. Residues 134–143 (GNWNQKKSNK) show a composition bias toward polar residues.

Testis. Is selectively expressed in the spermatids of seminiferous tubules.

Its subcellular location is the cytoplasm. It is found in the mitochondrion membrane. In terms of biological role, involved in sperm motility. Its absence is associated with genetic background dependent male infertility. Infertility may be due to reduced sperm motility in the female reproductive tract and inability to penetrate the oocyte zona pellucida. This Mus musculus (Mouse) protein is Sperm mitochondrial-associated cysteine-rich protein (Smcp).